The following is a 100-amino-acid chain: Putative insulin-like peptide beta-type 6 (100 aa).

Residues 1–18 (MHSIVALMLIGTILPIAA) form the signal peptide. 4 disulfide bridges follow: Cys-54-Cys-83, Cys-66-Cys-96, Cys-70-Cys-97, and Cys-82-Cys-87.

This sequence belongs to the insulin family.

The protein resides in the secreted. In Caenorhabditis elegans, this protein is Putative insulin-like peptide beta-type 6 (ins-5).